We begin with the raw amino-acid sequence, 330 residues long: uncharacterized protein (330 aa).

Residues 4–242 (LSIQNLVVEY…AGEVLFEQST (239 aa)) enclose the ABC transporter domain. Position 40–47 (40–47 (GPSGCGKT)) interacts with ATP. Residue 210-330 (DRVVELTPDF…LIEHRALAND (121 aa)) coordinates a nucleoside 3',5'-cyclic phosphate.

The protein belongs to the ABC transporter superfamily. The complex is composed of two ATP-binding proteins (MT0079), two transmembrane proteins (MT0078) and a solute-binding protein.

Probably part of an ABC transporter complex. Probably responsible for energy coupling to the transport system. This is an uncharacterized protein from Mycobacterium tuberculosis (strain CDC 1551 / Oshkosh).